Here is a 269-residue protein sequence, read N- to C-terminus: Cytochrome c oxidase subunit 3 (269 aa).

Transmembrane regions (helical) follow at residues 24–44, 46–66, 90–110, 132–152, 167–187, 207–227, and 247–267; these read FYNS…MHGF, NMYI…TLWF, GVGL…WTFF, IDPF…GVTV, ALYG…FQGI, FSTG…SVGL, and ILYW…IYFW.

Belongs to the cytochrome c oxidase subunit 3 family. As to quaternary structure, component of the cytochrome c oxidase (complex IV, CIV), a multisubunit enzyme composed of a catalytic core of 3 subunits and several supernumerary subunits. The complex exists as a monomer or a dimer and forms supercomplexes (SCs) in the inner mitochondrial membrane with ubiquinol-cytochrome c oxidoreductase (cytochrome b-c1 complex, complex III, CIII).

The protein localises to the mitochondrion inner membrane. The enzyme catalyses 4 Fe(II)-[cytochrome c] + O2 + 8 H(+)(in) = 4 Fe(III)-[cytochrome c] + 2 H2O + 4 H(+)(out). Its function is as follows. Component of the cytochrome c oxidase, the last enzyme in the mitochondrial electron transport chain which drives oxidative phosphorylation. The respiratory chain contains 3 multisubunit complexes succinate dehydrogenase (complex II, CII), ubiquinol-cytochrome c oxidoreductase (cytochrome b-c1 complex, complex III, CIII) and cytochrome c oxidase (complex IV, CIV), that cooperate to transfer electrons derived from NADH and succinate to molecular oxygen, creating an electrochemical gradient over the inner membrane that drives transmembrane transport and the ATP synthase. Cytochrome c oxidase is the component of the respiratory chain that catalyzes the reduction of oxygen to water. Electrons originating from reduced cytochrome c in the intermembrane space (IMS) are transferred via the dinuclear copper A center (CU(A)) of subunit 2 and heme A of subunit 1 to the active site in subunit 1, a binuclear center (BNC) formed by heme A3 and copper B (CU(B)). The BNC reduces molecular oxygen to 2 water molecules using 4 electrons from cytochrome c in the IMS and 4 protons from the mitochondrial matrix. This Trichophyton rubrum (Athlete's foot fungus) protein is Cytochrome c oxidase subunit 3 (COXIII).